The primary structure comprises 382 residues: Ribonuclease D (382 aa).

Residues 4 to 169 (ITTTAELASV…DVFAALDADL (166 aa)) enclose the 3'-5' exonuclease domain. An HRDC domain is found at 208–289 (KPKDLAVMME…QRGLARDPRE (82 aa)).

It belongs to the RNase D family. A divalent metal cation is required as a cofactor.

It is found in the cytoplasm. The enzyme catalyses Exonucleolytic cleavage that removes extra residues from the 3'-terminus of tRNA to produce 5'-mononucleotides.. Exonuclease involved in the 3' processing of various precursor tRNAs. Initiates hydrolysis at the 3'-terminus of an RNA molecule and releases 5'-mononucleotides. This chain is Ribonuclease D, found in Nitrobacter hamburgensis (strain DSM 10229 / NCIMB 13809 / X14).